Consider the following 413-residue polypeptide: Tubby-like F-box protein 6 (413 aa).

Residues 67–122 (SIWVDLPPELLLDIIQRIESEQSLWPGRRDVVACASVCKSWREMTKEVVKVPELSG) enclose the F-box domain.

It belongs to the TUB family. In terms of tissue distribution, ubiquitous, with higher levels in flowers.

This is Tubby-like F-box protein 6 from Arabidopsis thaliana (Mouse-ear cress).